Consider the following 239-residue polypeptide: Ribosomal RNA small subunit methyltransferase G (239 aa).

S-adenosyl-L-methionine is bound by residues glycine 78, phenylalanine 83, alanine 129 to glutamate 130, and arginine 148.

Belongs to the methyltransferase superfamily. RNA methyltransferase RsmG family.

The protein resides in the cytoplasm. Its function is as follows. Specifically methylates the N7 position of a guanine in 16S rRNA. The polypeptide is Ribosomal RNA small subunit methyltransferase G (Clostridium botulinum (strain Eklund 17B / Type B)).